The chain runs to 271 residues: S-adenosylmethionine decarboxylase proenzyme (271 aa).

Ser121 serves as the catalytic Schiff-base intermediate with substrate; via pyruvic acid. Ser121 carries the pyruvic acid (Ser); by autocatalysis modification. The Proton acceptor; for processing activity role is filled by His126. Cys149 (proton donor; for catalytic activity) is an active-site residue.

The protein belongs to the prokaryotic AdoMetDC family. Type 2 subfamily. Heterooctamer of four alpha and four beta chains arranged as a tetramer of alpha/beta heterodimers. Pyruvate is required as a cofactor. In terms of processing, is synthesized initially as an inactive proenzyme. Formation of the active enzyme involves a self-maturation process in which the active site pyruvoyl group is generated from an internal serine residue via an autocatalytic post-translational modification. Two non-identical subunits are generated from the proenzyme in this reaction, and the pyruvate is formed at the N-terminus of the alpha chain, which is derived from the carboxyl end of the proenzyme. The post-translation cleavage follows an unusual pathway, termed non-hydrolytic serinolysis, in which the side chain hydroxyl group of the serine supplies its oxygen atom to form the C-terminus of the beta chain, while the remainder of the serine residue undergoes an oxidative deamination to produce ammonia and the pyruvoyl group blocking the N-terminus of the alpha chain.

It carries out the reaction S-adenosyl-L-methionine + H(+) = S-adenosyl 3-(methylsulfanyl)propylamine + CO2. It participates in amine and polyamine biosynthesis; S-adenosylmethioninamine biosynthesis; S-adenosylmethioninamine from S-adenosyl-L-methionine: step 1/1. Functionally, catalyzes the decarboxylation of S-adenosylmethionine to S-adenosylmethioninamine (dcAdoMet), the propylamine donor required for the synthesis of the polyamines spermine and spermidine from the diamine putrescine. This Clostridium perfringens (strain ATCC 13124 / DSM 756 / JCM 1290 / NCIMB 6125 / NCTC 8237 / Type A) protein is S-adenosylmethionine decarboxylase proenzyme.